The following is a 219-amino-acid chain: Redox-sensing transcriptional repressor Rex (219 aa).

The H-T-H motif DNA-binding region spans 17–56 (LYYRIFKRFHRENIVKTSSKQIAEAIGIDPATVRRDFSYF). 91–96 (GVGNIG) is an NAD(+) binding site.

The protein belongs to the transcriptional regulatory Rex family. As to quaternary structure, homodimer.

Its subcellular location is the cytoplasm. Functionally, modulates transcription in response to changes in cellular NADH/NAD(+) redox state. The chain is Redox-sensing transcriptional repressor Rex from Streptococcus thermophilus (strain ATCC BAA-491 / LMD-9).